The following is a 186-amino-acid chain: Ribosome maturation factor RimP (186 aa).

It belongs to the RimP family.

It is found in the cytoplasm. Functionally, required for maturation of 30S ribosomal subunits. The chain is Ribosome maturation factor RimP from Rhizorhabdus wittichii (strain DSM 6014 / CCUG 31198 / JCM 15750 / NBRC 105917 / EY 4224 / RW1) (Sphingomonas wittichii).